The primary structure comprises 417 residues: Putative Bro-N domain-containing protein 289L (417 aa).

The 131-residue stretch at 4–134 folds into the Bro-N domain; that stretch reads LINLKDCKEY…VILPSIRKFG (131 aa). A coiled-coil region spans residues 152–193; it reads KDKSEQELQFQLKQEREEKENAYIKLRSETKRLKQQIKRTLE.

Belongs to the IIV-6 201R/289L family.

This is Putative Bro-N domain-containing protein 289L from Invertebrate iridescent virus 6 (IIV-6).